Consider the following 361-residue polypeptide: Phospho-N-acetylmuramoyl-pentapeptide-transferase (361 aa).

The next 10 helical transmembrane spans lie at 25 to 45 (TGGA…WIIN), 72 to 92 (TPTM…VLWA), 95 to 115 (VNPY…VGFY), 133 to 153 (TRLL…VWLG), 169 to 189 (VVLN…VGAG), 200 to 220 (GLAI…AYLA), 240 to 260 (LAVL…FNAP), 264 to 284 (IFMG…IAVA), 289 to 309 (IVLA…IVQV), and 338 to 358 (QIVI…LATL).

The protein belongs to the glycosyltransferase 4 family. MraY subfamily. Mg(2+) is required as a cofactor.

The protein localises to the cell inner membrane. The enzyme catalyses UDP-N-acetyl-alpha-D-muramoyl-L-alanyl-gamma-D-glutamyl-meso-2,6-diaminopimeloyl-D-alanyl-D-alanine + di-trans,octa-cis-undecaprenyl phosphate = di-trans,octa-cis-undecaprenyl diphospho-N-acetyl-alpha-D-muramoyl-L-alanyl-D-glutamyl-meso-2,6-diaminopimeloyl-D-alanyl-D-alanine + UMP. The protein operates within cell wall biogenesis; peptidoglycan biosynthesis. Catalyzes the initial step of the lipid cycle reactions in the biosynthesis of the cell wall peptidoglycan: transfers peptidoglycan precursor phospho-MurNAc-pentapeptide from UDP-MurNAc-pentapeptide onto the lipid carrier undecaprenyl phosphate, yielding undecaprenyl-pyrophosphoryl-MurNAc-pentapeptide, known as lipid I. In Rhodopseudomonas palustris (strain BisB5), this protein is Phospho-N-acetylmuramoyl-pentapeptide-transferase.